We begin with the raw amino-acid sequence, 304 residues long: Probable aspartoacylase (304 aa).

Residues His13 and Glu16 each contribute to the Zn(2+) site. Substrate-binding positions include Arg55 and 62-63; that span reads NR. Zn(2+) is bound at residue His104. The substrate site is built by Glu162 and Tyr272.

It belongs to the AspA/AstE family. Aspartoacylase subfamily. The cofactor is Zn(2+).

It carries out the reaction an N-acyl-L-aspartate + H2O = a carboxylate + L-aspartate. The polypeptide is Probable aspartoacylase (Synechococcus sp. (strain CC9605)).